Reading from the N-terminus, the 637-residue chain is 1-deoxy-D-xylulose-5-phosphate synthase (637 aa).

Residues His74 and 115–117 (GHS) each bind thiamine diphosphate. Asp146 serves as a coordination point for Mg(2+). Residues 147 to 148 (GA), Asn175, Tyr285, and Glu366 each bind thiamine diphosphate. Asn175 provides a ligand contact to Mg(2+).

It belongs to the transketolase family. DXPS subfamily. As to quaternary structure, homodimer. It depends on Mg(2+) as a cofactor. Requires thiamine diphosphate as cofactor.

It carries out the reaction D-glyceraldehyde 3-phosphate + pyruvate + H(+) = 1-deoxy-D-xylulose 5-phosphate + CO2. The protein operates within metabolic intermediate biosynthesis; 1-deoxy-D-xylulose 5-phosphate biosynthesis; 1-deoxy-D-xylulose 5-phosphate from D-glyceraldehyde 3-phosphate and pyruvate: step 1/1. Its function is as follows. Catalyzes the acyloin condensation reaction between C atoms 2 and 3 of pyruvate and glyceraldehyde 3-phosphate to yield 1-deoxy-D-xylulose-5-phosphate (DXP). The chain is 1-deoxy-D-xylulose-5-phosphate synthase from Pelotomaculum thermopropionicum (strain DSM 13744 / JCM 10971 / SI).